The primary structure comprises 396 residues: 1-deoxy-D-xylulose 5-phosphate reductoisomerase (396 aa).

NADPH contacts are provided by Thr-15, Gly-16, Ser-17, Ile-18, Gly-41, and Asn-130. Residue Lys-131 participates in 1-deoxy-D-xylulose 5-phosphate binding. Glu-132 contributes to the NADPH binding site. Asp-155 serves as a coordination point for Mn(2+). The 1-deoxy-D-xylulose 5-phosphate site is built by Ser-156, Glu-157, Ser-181, and His-204. Glu-157 lines the Mn(2+) pocket. Gly-210 is an NADPH binding site. Ser-217, Asn-222, Lys-223, and Glu-226 together coordinate 1-deoxy-D-xylulose 5-phosphate. A Mn(2+)-binding site is contributed by Glu-226.

Belongs to the DXR family. It depends on Mg(2+) as a cofactor. Mn(2+) is required as a cofactor.

It carries out the reaction 2-C-methyl-D-erythritol 4-phosphate + NADP(+) = 1-deoxy-D-xylulose 5-phosphate + NADPH + H(+). It participates in isoprenoid biosynthesis; isopentenyl diphosphate biosynthesis via DXP pathway; isopentenyl diphosphate from 1-deoxy-D-xylulose 5-phosphate: step 1/6. Its function is as follows. Catalyzes the NADPH-dependent rearrangement and reduction of 1-deoxy-D-xylulose-5-phosphate (DXP) to 2-C-methyl-D-erythritol 4-phosphate (MEP). This is 1-deoxy-D-xylulose 5-phosphate reductoisomerase from Bifidobacterium longum subsp. infantis (strain ATCC 15697 / DSM 20088 / JCM 1222 / NCTC 11817 / S12).